Reading from the N-terminus, the 121-residue chain is Large ribosomal subunit protein uL18 (121 aa).

It belongs to the universal ribosomal protein uL18 family. In terms of assembly, part of the 50S ribosomal subunit; part of the 5S rRNA/L5/L18/L25 subcomplex. Contacts the 5S and 23S rRNAs.

In terms of biological role, this is one of the proteins that bind and probably mediate the attachment of the 5S RNA into the large ribosomal subunit, where it forms part of the central protuberance. This chain is Large ribosomal subunit protein uL18, found in Polaromonas sp. (strain JS666 / ATCC BAA-500).